The chain runs to 257 residues: Putative aldolase class 2 protein CC_1201 (257 aa).

Zn(2+) is bound by residues His-114, His-116, and His-177.

It belongs to the aldolase class II family. Zn(2+) serves as cofactor.

In Caulobacter vibrioides (strain ATCC 19089 / CIP 103742 / CB 15) (Caulobacter crescentus), this protein is Putative aldolase class 2 protein CC_1201.